Reading from the N-terminus, the 256-residue chain is Imidazole glycerol phosphate synthase subunit HisF (256 aa).

Catalysis depends on residues aspartate 11 and aspartate 130.

This sequence belongs to the HisA/HisF family. Heterodimer of HisH and HisF.

It is found in the cytoplasm. The enzyme catalyses 5-[(5-phospho-1-deoxy-D-ribulos-1-ylimino)methylamino]-1-(5-phospho-beta-D-ribosyl)imidazole-4-carboxamide + L-glutamine = D-erythro-1-(imidazol-4-yl)glycerol 3-phosphate + 5-amino-1-(5-phospho-beta-D-ribosyl)imidazole-4-carboxamide + L-glutamate + H(+). The protein operates within amino-acid biosynthesis; L-histidine biosynthesis; L-histidine from 5-phospho-alpha-D-ribose 1-diphosphate: step 5/9. IGPS catalyzes the conversion of PRFAR and glutamine to IGP, AICAR and glutamate. The HisF subunit catalyzes the cyclization activity that produces IGP and AICAR from PRFAR using the ammonia provided by the HisH subunit. This Prochlorococcus marinus (strain AS9601) protein is Imidazole glycerol phosphate synthase subunit HisF.